An 877-amino-acid chain; its full sequence is Alanine--tRNA ligase (877 aa).

The Zn(2+) site is built by His565, His569, Cys667, and His671.

It belongs to the class-II aminoacyl-tRNA synthetase family. Requires Zn(2+) as cofactor.

It localises to the cytoplasm. The enzyme catalyses tRNA(Ala) + L-alanine + ATP = L-alanyl-tRNA(Ala) + AMP + diphosphate. Catalyzes the attachment of alanine to tRNA(Ala) in a two-step reaction: alanine is first activated by ATP to form Ala-AMP and then transferred to the acceptor end of tRNA(Ala). Also edits incorrectly charged Ser-tRNA(Ala) and Gly-tRNA(Ala) via its editing domain. This chain is Alanine--tRNA ligase, found in Chromobacterium violaceum (strain ATCC 12472 / DSM 30191 / JCM 1249 / CCUG 213 / NBRC 12614 / NCIMB 9131 / NCTC 9757 / MK).